A 390-amino-acid polypeptide reads, in one-letter code: ATP-sensitive inward rectifier potassium channel 11 (390 aa).

At 1–65 (MLSRKGIIPE…LQDVFTTLVD (65 aa)) the chain is on the cytoplasmic side. 2 residues coordinate ATP: asparagine 48 and arginine 50. Residues 66-92 (LKWPHTLLIFTMSFLCSWLLFAMVWWL) form a helical membrane-spanning segment. Topologically, residues 93–116 (IAFAHGDLAPGEGTNVPCVTSIHS) are extracellular. An intrachain disulfide couples cysteine 110 to cysteine 142. Residues 117 to 133 (FSSAFLFSIEVQVTIGF) constitute an intramembrane region (discontinuously helical; Pore-forming). Threonine 130 and phenylalanine 133 together coordinate K(+). The short motif at 130-135 (TIGFGG) is the Selectivity filter element. Topologically, residues 134–142 (GGRMVTEEC) are extracellular. A helical membrane pass occupies residues 143–171 (PLAILILIVQNIVGLMINAIMLGCIFMKT). Over 172–390 (AQAHRRAETL…KFSISPDSLS (219 aa)) the chain is Cytoplasmic. Residue arginine 176 coordinates a 1,2-diacyl-sn-glycero-3-phospho-(1D-myo-inositol-4,5-bisphosphate). Tyrosine 330 lines the ATP pocket. Threonine 341 is subject to Phosphothreonine; by MAPK1. Serine 385 carries the post-translational modification Phosphoserine; by MAPK1.

This sequence belongs to the inward rectifier-type potassium channel (TC 1.A.2.1) family. KCNJ11 subfamily. In terms of assembly, homotetramer; the homotetramer binds four ATP molecules (one ATP per subunit). Forms an heterooctamer with ABCC8/SUR1; one KCNJ11 homotetramer interacts with four ABCC8/SUR1 molecules. Interacts with ABCC9/SUR2. Post-translationally, phosphorylation by MAPK1 results in changes in channel gating that destabilize the closed states and reduce the ATP sensitivity.

The protein localises to the membrane. It carries out the reaction K(+)(in) = K(+)(out). Its activity is regulated as follows. KATP channels are regulated by cytoplasmic ATP/ADP ratios; ATP inhibits the channel by closing the pore, while ADP activates the channel. Activated by phosphatidylinositol 4,5-biphosphate (PtdIns(4,5)P2). Inward rectifier potassium channel that forms the pore of ATP-sensitive potassium channels (KATP), regulating potassium permeability as a function of cytoplasmic ATP and ADP concentrations in many different cells. Inward rectifier potassium channels are characterized by a greater tendency to allow potassium to flow into the cell rather than out of it. Their voltage dependence is regulated by the concentration of extracellular potassium; as external potassium is raised, the voltage range of the channel opening shifts to more positive voltages. The inward rectification is mainly due to the blockage of outward current by internal magnesium. Can be blocked by extracellular barium. In pancreatic cells, it forms KATP channels with ABCC8/SUR1. Can form cardiac and smooth muscle-type KATP channels with ABCC9. In Mus musculus (Mouse), this protein is ATP-sensitive inward rectifier potassium channel 11 (Kcnj11).